The sequence spans 608 residues: ABC transporter ATP-binding protein RamB (608 aa).

5 consecutive transmembrane segments (helical) span residues 25–45 (GVLVRLALWSLAESGQAFLVG), 66–86 (LWLGVALVAVLSGARVVRGVF), 141–161 (GLVLTLRSFVFTAAGALLGLL), 166–186 (ALLVVVLPPLAAGLALFLVTL), and 253–273 (AALGVAGHLPVLALLVAVEWL). Residues 30–296 (LALWSLAESG…FTYLVQSLLP (267 aa)) form the ABC transmembrane type-1 domain. Positions 321-362 (GPEPEPEPEPEPEPEPELGSGLEPEPEPASEPESGPSTASAS) are disordered. Residues 324 to 336 (PEPEPEPEPEPEP) are compositionally biased toward acidic residues. Positions 351–362 (EPESGPSTASAS) are enriched in low complexity. The region spanning 376-605 (VELRSVTLSY…SPLYRDLTGH (230 aa)) is the ABC transporter domain. Residue 410–417 (GPSGIGKS) participates in ATP binding.

This sequence belongs to the ABC transporter superfamily.

Its subcellular location is the cell membrane. Probably involved in exporting SapB from the cell. Expression of the ram locus (ramA, ramB and ramR) induces rapid aerial mycelium formation in S.lividans. The sequence is that of ABC transporter ATP-binding protein RamB from Streptomyces coelicolor (strain ATCC BAA-471 / A3(2) / M145).